The chain runs to 149 residues: Probable cyclic pyranopterin monophosphate synthase (149 aa).

Substrate is bound by residues L67–H69 and M103–E104. Residue D118 is part of the active site.

Belongs to the MoaC family. As to quaternary structure, homohexamer; trimer of dimers.

The enzyme catalyses (8S)-3',8-cyclo-7,8-dihydroguanosine 5'-triphosphate = cyclic pyranopterin phosphate + diphosphate. It participates in cofactor biosynthesis; molybdopterin biosynthesis. Catalyzes the conversion of (8S)-3',8-cyclo-7,8-dihydroguanosine 5'-triphosphate to cyclic pyranopterin monophosphate (cPMP). The polypeptide is Probable cyclic pyranopterin monophosphate synthase (Saccharolobus solfataricus (strain ATCC 35092 / DSM 1617 / JCM 11322 / P2) (Sulfolobus solfataricus)).